The sequence spans 89 residues: Putative membrane protein insertion efficiency factor (89 aa).

The interval 69–89 (DPVPPAHTERGGTMCPSRLPE) is disordered.

It belongs to the UPF0161 family.

It is found in the cell inner membrane. Functionally, could be involved in insertion of integral membrane proteins into the membrane. The protein is Putative membrane protein insertion efficiency factor of Paramagnetospirillum magneticum (strain ATCC 700264 / AMB-1) (Magnetospirillum magneticum).